We begin with the raw amino-acid sequence, 206 residues long: MEYRLKAYYREGEKPSALRRAGKLPGVMYNRHLNRKVYVDLVEFDKVFRQASIHHVIVLELPDGQSLPTLVRQVNLDKRRRRPEHVDFFVLSDEPVEMYVPLRFVGTPAGVRAGGVLQEIHRDILVKVSPRNIPEFIEVDVSGLEIGDSLHASDLKLPPGVELAVSPEETIAAVVPPEDVEKLAEEAAAEVAEPEVIKKGKEEEEE.

A disordered region spans residues 184-206 (AEEAAAEVAEPEVIKKGKEEEEE). Residues 195-206 (EVIKKGKEEEEE) are compositionally biased toward basic and acidic residues.

The protein belongs to the bacterial ribosomal protein bL25 family. CTC subfamily. As to quaternary structure, part of the 50S ribosomal subunit; part of the 5S rRNA/L5/L18/L25 subcomplex. Contacts the 5S rRNA. Binds to the 5S rRNA independently of L5 and L18.

This is one of the proteins that binds to the 5S RNA in the ribosome where it forms part of the central protuberance. The sequence is that of Large ribosomal subunit protein bL25 from Thermus thermophilus (strain ATCC BAA-163 / DSM 7039 / HB27).